A 674-amino-acid polypeptide reads, in one-letter code: UvrABC system protein C (674 aa).

One can recognise a GIY-YIG domain in the interval asparagine 64–valine 142. The UVR domain occupies glutamine 252 to valine 287.

The protein belongs to the UvrC family. Interacts with UvrB in an incision complex.

The protein localises to the cytoplasm. Functionally, the UvrABC repair system catalyzes the recognition and processing of DNA lesions. UvrC both incises the 5' and 3' sides of the lesion. The N-terminal half is responsible for the 3' incision and the C-terminal half is responsible for the 5' incision. In Rhizobium meliloti (strain 1021) (Ensifer meliloti), this protein is UvrABC system protein C.